Consider the following 462-residue polypeptide: Argininosuccinate lyase (462 aa).

It belongs to the lyase 1 family. Argininosuccinate lyase subfamily.

It is found in the cytoplasm. The enzyme catalyses 2-(N(omega)-L-arginino)succinate = fumarate + L-arginine. The protein operates within amino-acid biosynthesis; L-arginine biosynthesis; L-arginine from L-ornithine and carbamoyl phosphate: step 3/3. This is Argininosuccinate lyase from Leuconostoc citreum (strain KM20).